Consider the following 351-residue polypeptide: MQIASSPFTHNQRSTRRIMLLVILACIPGIIAQTYFFGYGSLIQVMLAMITALLAEGAVLQLRKQPVMARLQDNSALLTALLLGISLPPLAPWWMIVLGTLFAIVIAKQLYGGLGQNPFNPAMVGYVVLLISFPVQMTSWLPPLPLQGTSVGFYDSLLTIFTGYTHSGENIHQLQVGYDGISQATPLDTFKTSLRSQPADQILQQPIFGGVLAGLGWQWVNIGFLVGGLLLLWRKAIHWHIPVSFLLALGGCAAVSWMIAPQSFASPMLHLFSGATMLGAFFIATDPVSASTTPRGRLIFGALIGILVWLIRVYGGYPDGVAFAVLLANITVPLIDHYTQPRVYGHKSGHK.

The next 4 membrane-spanning stretches (helical) occupy residues 18 to 38 (IMLL…YFFG), 40 to 60 (GSLI…GAVL), 87 to 107 (LPPL…IVIA), and 121 to 141 (PAMV…TSWL). An FMN phosphoryl threonine modification is found at threonine 185. The next 5 helical transmembrane spans lie at 211-231 (VLAG…GLLL), 241-261 (IPVS…MIAP), 264-284 (FASP…FFIA), 298-318 (LIFG…GGYP), and 320-340 (GVAF…HYTQ).

The protein belongs to the NqrB/RnfD family. As to quaternary structure, the complex is composed of six subunits: RnfA, RnfB, RnfC, RnfD, RnfE and RnfG. The cofactor is FMN.

The protein localises to the cell inner membrane. Its function is as follows. Part of a membrane-bound complex that couples electron transfer with translocation of ions across the membrane. The chain is Ion-translocating oxidoreductase complex subunit D from Yersinia pseudotuberculosis serotype I (strain IP32953).